The chain runs to 1048 residues: Putative truncated guanine nucleotide exchange factor SDC25 (1048 aa).

2 disordered regions span residues 208–242 and 419–444; these read SKQGTSCSSETSHHSPSAPFQRRRRGTIFSNVSGS and LNLDNAKDKKNGSQNTDIQEEEDEYE. The span at 212 to 224 shows a compositional bias: low complexity; it reads TSCSSETSHHSPS. The N-terminal Ras-GEF domain maps to 578–710; the sequence is SNNRIKGGSK…LLKEVNQKFK (133 aa). Residues 748–995 enclose the Ras-GEF domain; sequence DPVLFATQLT…YQLSLIIEPK (248 aa). A disordered region spans residues 997–1048; sequence RKKVVPNSNSNNKSQEKSRDDQTDEGKTSTKKDRFPKFQLHKTKKKAPKVSK. Residues 1010 to 1032 are compositionally biased toward basic and acidic residues; that stretch reads SQEKSRDDQTDEGKTSTKKDRFP. Residues 1035–1048 are compositionally biased toward basic residues; sequence QLHKTKKKAPKVSK.

Functionally, promotes the exchange of Ras-bound GDP by GTP. In Saccharomyces cerevisiae (strain ATCC 204508 / S288c) (Baker's yeast), this protein is Putative truncated guanine nucleotide exchange factor SDC25 (SDC25).